Here is a 325-residue protein sequence, read N- to C-terminus: Phosphatidylglycerol--prolipoprotein diacylglyceryl transferase (325 aa).

The next 4 membrane-spanning stretches (helical) occupy residues I19 to G39, G47 to G67, I93 to I113, and G119 to I139. R141 provides a ligand contact to a 1,2-diacyl-sn-glycero-3-phospho-(1'-sn-glycerol). 3 helical membrane-spanning segments follow: residues H175–A195, F207–R225, and L237–A257. Positions I266–T312 are enriched in basic and acidic residues. The segment at I266–A325 is disordered. Positions A313 to A325 are enriched in low complexity.

This sequence belongs to the Lgt family.

It localises to the cell membrane. The catalysed reaction is L-cysteinyl-[prolipoprotein] + a 1,2-diacyl-sn-glycero-3-phospho-(1'-sn-glycerol) = an S-1,2-diacyl-sn-glyceryl-L-cysteinyl-[prolipoprotein] + sn-glycerol 1-phosphate + H(+). It functions in the pathway protein modification; lipoprotein biosynthesis (diacylglyceryl transfer). Its function is as follows. Catalyzes the transfer of the diacylglyceryl group from phosphatidylglycerol to the sulfhydryl group of the N-terminal cysteine of a prolipoprotein, the first step in the formation of mature lipoproteins. The polypeptide is Phosphatidylglycerol--prolipoprotein diacylglyceryl transferase (Streptomyces griseus subsp. griseus (strain JCM 4626 / CBS 651.72 / NBRC 13350 / KCC S-0626 / ISP 5235)).